The sequence spans 463 residues: Nicotinate phosphoribosyltransferase pncB2 (463 aa).

Position 202 is a phosphohistidine (H202).

This sequence belongs to the NAPRTase family. Transiently phosphorylated on a His residue during the reaction cycle. Phosphorylation strongly increases the affinity for substrates and increases the rate of nicotinate D-ribonucleotide production. Dephosphorylation regenerates the low-affinity form of the enzyme, leading to product release.

The enzyme catalyses nicotinate + 5-phospho-alpha-D-ribose 1-diphosphate + ATP + H2O = nicotinate beta-D-ribonucleotide + ADP + phosphate + diphosphate. It functions in the pathway cofactor biosynthesis; NAD(+) biosynthesis; nicotinate D-ribonucleotide from nicotinate: step 1/1. Involved in the Preiss-Handler pathway, which is a recycling route that permits the salvage of free nicotinamide (NM) and nicotinic acid (Na) involved in the NAD biosynthesis. Catalyzes the synthesis of beta-nicotinate D-ribonucleotide from nicotinate and 5-phospho-D-ribose 1-phosphate at the expense of ATP. It is not able to use nicotinamide. PncB2 appears to be responsible for the increased salvage synthesis of NAD during infection of host tissues. The sequence is that of Nicotinate phosphoribosyltransferase pncB2 (pncB2) from Mycobacterium tuberculosis (strain CDC 1551 / Oshkosh).